The primary structure comprises 149 residues: MTKESKPDRLRQMGALNPKPESVRAPWFREAGFFDPLDLVQVKYEMLRHAREDGTNKADAAALFGLSRQTYYQAEAAFERDGMSGLLPRTRGPKSAHKLTGEVMRLVEEHLDANGQLQARSLADLVHSRLGISVHPRSIERAVARKKKR.

The segment covering 1 to 11 has biased composition (basic and acidic residues); that stretch reads MTKESKPDRLR. Positions 1-20 are disordered; sequence MTKESKPDRLRQMGALNPKP.

This is an uncharacterized protein from Sinorhizobium fredii (strain NBRC 101917 / NGR234).